We begin with the raw amino-acid sequence, 954 residues long: Centrosomal protein of 112 kDa (954 aa).

Residues 276 to 954 (QKHDAEVQKI…EELTTYQSRR (679 aa)) adopt a coiled-coil conformation.

The protein resides in the cytoplasm. Its subcellular location is the cytoskeleton. It is found in the microtubule organizing center. It localises to the centrosome. The polypeptide is Centrosomal protein of 112 kDa (Cep112) (Mus musculus (Mouse)).